A 142-amino-acid polypeptide reads, in one-letter code: Hemoglobin anodic subunit alpha (142 aa).

The residue at position 1 (serine 1) is an N-acetylserine. The Globin domain occupies 1 to 142 (SLSTKDKAVV…LALALADRYR (142 aa)). An O2-binding site is contributed by histidine 59. Histidine 88 is a heme b binding site.

This sequence belongs to the globin family. As to quaternary structure, heterotetramer of two alpha chains and two beta chains. In terms of tissue distribution, red blood cells.

Its function is as follows. Involved in oxygen transport from gills to the various peripheral tissues. The protein is Hemoglobin anodic subunit alpha of Gymnothorax unicolor (Brown moray).